A 396-amino-acid chain; its full sequence is Phosphoglycerate kinase (396 aa).

Substrate-binding positions include 21–23, R36, 59–62, R118, and R151; these read DLN and HFGR. Residues K201, E323, and 353–356 contribute to the ATP site; that span reads GGDT.

This sequence belongs to the phosphoglycerate kinase family. As to quaternary structure, monomer.

The protein resides in the cytoplasm. It carries out the reaction (2R)-3-phosphoglycerate + ATP = (2R)-3-phospho-glyceroyl phosphate + ADP. It participates in carbohydrate degradation; glycolysis; pyruvate from D-glyceraldehyde 3-phosphate: step 2/5. This Rhodospirillum centenum (strain ATCC 51521 / SW) protein is Phosphoglycerate kinase.